The primary structure comprises 388 residues: UDP-N-acetylglucosamine--N-acetylmuramyl-(pentapeptide) pyrophosphoryl-undecaprenol N-acetylglucosamine transferase (388 aa).

Residues 42 to 44, asparagine 159, arginine 195, serine 223, isoleucine 277, and glutamine 322 contribute to the UDP-N-acetyl-alpha-D-glucosamine site; that span reads TGG.

Belongs to the glycosyltransferase 28 family. MurG subfamily.

It is found in the cell inner membrane. It catalyses the reaction di-trans,octa-cis-undecaprenyl diphospho-N-acetyl-alpha-D-muramoyl-L-alanyl-D-glutamyl-meso-2,6-diaminopimeloyl-D-alanyl-D-alanine + UDP-N-acetyl-alpha-D-glucosamine = di-trans,octa-cis-undecaprenyl diphospho-[N-acetyl-alpha-D-glucosaminyl-(1-&gt;4)]-N-acetyl-alpha-D-muramoyl-L-alanyl-D-glutamyl-meso-2,6-diaminopimeloyl-D-alanyl-D-alanine + UDP + H(+). Its pathway is cell wall biogenesis; peptidoglycan biosynthesis. Cell wall formation. Catalyzes the transfer of a GlcNAc subunit on undecaprenyl-pyrophosphoryl-MurNAc-pentapeptide (lipid intermediate I) to form undecaprenyl-pyrophosphoryl-MurNAc-(pentapeptide)GlcNAc (lipid intermediate II). The polypeptide is UDP-N-acetylglucosamine--N-acetylmuramyl-(pentapeptide) pyrophosphoryl-undecaprenol N-acetylglucosamine transferase (Albidiferax ferrireducens (strain ATCC BAA-621 / DSM 15236 / T118) (Rhodoferax ferrireducens)).